Consider the following 626-residue polypeptide: DNA primase (626 aa).

A CHC2-type zinc finger spans residues 39–63 (CPFHGEKTPSFSVSPEKQIFHCFGC). Positions 264–346 (EEITLMEGFM…DVFVLQLPAG (83 aa)) constitute a Toprim domain. Glutamate 270, aspartate 314, and aspartate 316 together coordinate Mg(2+).

This sequence belongs to the DnaG primase family. Monomer. Interacts with DnaB. Requires Zn(2+) as cofactor. It depends on Mg(2+) as a cofactor.

The catalysed reaction is ssDNA + n NTP = ssDNA/pppN(pN)n-1 hybrid + (n-1) diphosphate.. Its function is as follows. RNA polymerase that catalyzes the synthesis of short RNA molecules used as primers for DNA polymerase during DNA replication. The polypeptide is DNA primase (Listeria innocua serovar 6a (strain ATCC BAA-680 / CLIP 11262)).